The primary structure comprises 53 residues: UPF0391 membrane protein PputGB1_0151 (53 aa).

Helical transmembrane passes span 4 to 24 and 29 to 49; these read WAITFLIIAIVAAVLGFGGIA and GIAKILFIVFLVLFVASFFFG.

Belongs to the UPF0391 family.

Its subcellular location is the cell membrane. The polypeptide is UPF0391 membrane protein PputGB1_0151 (Pseudomonas putida (strain GB-1)).